Here is a 99-residue protein sequence, read N- to C-terminus: DNA-binding protein HmvA (99 aa).

The tract at residues 52–55 (KTIK) is interaction with DNA.

Belongs to the archaeal histone HMF family. Homodimer or heterodimer with another histone. Dimers then assemble into higher oligomers, with the DNA wrapped around the protein core.

The protein resides in the cytoplasm. Its subcellular location is the chromosome. In terms of biological role, binds and compact DNA (95 to 150 base pairs) to form nucleosome-like structures that contain positive DNA supercoils. Increases the resistance of DNA to thermal denaturation (in vitro). This chain is DNA-binding protein HmvA (hmvA), found in Methanococcus voltae.